The following is a 152-amino-acid chain: uncharacterized protein (152 aa).

Helical transmembrane passes span 2–22 (GVVF…LKLM), 33–53 (LKMI…WLIM), 58–78 (FLIE…LIYL), 97–117 (FMGN…IEYV), and 122–142 (IASP…FFNC).

It localises to the cell membrane. This is an uncharacterized protein from Methanocaldococcus jannaschii (strain ATCC 43067 / DSM 2661 / JAL-1 / JCM 10045 / NBRC 100440) (Methanococcus jannaschii).